A 261-amino-acid chain; its full sequence is uncharacterized protein (261 aa).

41-48 (GKSGSGKS) contributes to the ATP binding site.

The protein belongs to the IIV-6 075L family.

This is an uncharacterized protein from Invertebrate iridescent virus 3 (IIV-3).